The following is a 434-amino-acid chain: MLDFMDYIQLAFAEATNWNRDNSYSSLTATAQSLLDFSTPERLRVHLSSLSTPHFATSYTLGTVGLIDGSVSYLFSTVPLDKFPSRSALIPLRKLSPGYRQVQAPIAPIAETILINDDLNDASAYTTIGKKATLFHATLHLPPPTTLNALFLRRISPTMQLSLAVCSTRGPPLSKSAPQASLLAQLSHNTGKYNNEYLFSTDNALFGWRGLWNFGPDPRDPVASGSSPRLSLLSAGAEAYYSPVSSLIGMSTGLRFSTANANTPISTFPYTLTLTLTPLTGSLSTTYSLRASPNLAFSSRFGFNVYSWESEMVAGCELWRKSKSRYRDDGDGVEWARRKIRESLFPHPHPHLSTSTPNDIKDLAGHALEKSGKGEEEENESVLKIRVDQSWNVRLLWEGRVKELLVLIDRVVEVYSNERCLRELRLMVVFNLDL.

This sequence belongs to the MDM10 family. In terms of assembly, component of the ER-mitochondria encounter structure (ERMES) or MDM complex, composed of mmm1, mdm10, mdm12 and mdm34. Associates with the mitochondrial outer membrane sorting assembly machinery SAM(core) complex.

It is found in the mitochondrion outer membrane. Its function is as follows. Component of the ERMES/MDM complex, which serves as a molecular tether to connect the endoplasmic reticulum and mitochondria. Components of this complex are involved in the control of mitochondrial shape and protein biogenesis and may function in phospholipid exchange. mdm10 is involved in the late assembly steps of the general translocase of the mitochondrial outer membrane (TOM complex). Functions in the tom40-specific route of the assembly of outer membrane beta-barrel proteins, including the association of tom40 with the receptor tom22 and small TOM proteins. Can associate with the SAM(core) complex as well as the mdm12-mmm1 complex, both involved in late steps of the major beta-barrel assembly pathway, that is responsible for biogenesis of all outer membrane beta-barrel proteins. May act as a switch that shuttles between both complexes and channels precursor proteins into the tom40-specific pathway. Plays a role in mitochondrial morphology and in the inheritance of mitochondria. The polypeptide is Mitochondrial distribution and morphology protein 10 (mdmB) (Aspergillus niger (strain ATCC MYA-4892 / CBS 513.88 / FGSC A1513)).